Consider the following 158-residue polypeptide: uncharacterized protein (158 aa).

Positions 12–73 (LDEIDRAILR…LINPFKAGYE (62 aa)) constitute an HTH asnC-type domain. The segment at residues 31–50 (YSEISRRINVPESTVRARVN) is a DNA-binding region (H-T-H motif).

This is an uncharacterized protein from Pyrococcus horikoshii (strain ATCC 700860 / DSM 12428 / JCM 9974 / NBRC 100139 / OT-3).